Reading from the N-terminus, the 291-residue chain is Probable endonuclease 4 (291 aa).

Zn(2+) is bound by residues His-72, His-112, Glu-147, Asp-181, His-184, His-215, Asp-228, His-230, and Glu-260.

Belongs to the AP endonuclease 2 family. The cofactor is Zn(2+).

The enzyme catalyses Endonucleolytic cleavage to 5'-phosphooligonucleotide end-products.. In terms of biological role, endonuclease IV plays a role in DNA repair. It cleaves phosphodiester bonds at apurinic or apyrimidinic (AP) sites, generating a 3'-hydroxyl group and a 5'-terminal sugar phosphate. The protein is Probable endonuclease 4 of Mycoplasma genitalium (strain ATCC 33530 / DSM 19775 / NCTC 10195 / G37) (Mycoplasmoides genitalium).